A 95-amino-acid chain; its full sequence is Cliotide T5 (95 aa).

Residues 1 to 30 constitute a cross-link (cyclopeptide (Gly-Asn)); that stretch reads GIPCGESCVFIPCISTVIGCSCKNKVCYRN. 3 disulfides stabilise this stretch: C4–C20, C8–C22, and C13–C27. Positions 31 to 95 are cleaved as a propeptide — removed in mature form; it reads HVIAAEAKTM…KDHLKMSITN (65 aa).

In terms of processing, contains 3 disulfide bonds. This is a cyclic peptide. As to expression, expressed in stem, shoot, root, leaf, pod and nodule but not in flower and seed (at protein level).

Probably participates in a plant defense mechanism. The chain is Cliotide T5 from Clitoria ternatea (Butterfly pea).